We begin with the raw amino-acid sequence, 204 residues long: Tat proofreading chaperone DmsD (204 aa).

Belongs to the TorD/DmsD family. DmsD subfamily.

Required for biogenesis/assembly of DMSO reductase, but not for the interaction of the DmsA signal peptide with the Tat system. May be part of a chaperone cascade complex that facilitates a folding-maturation pathway for the substrate protein. The polypeptide is Tat proofreading chaperone DmsD (Escherichia coli O6:H1 (strain CFT073 / ATCC 700928 / UPEC)).